The sequence spans 427 residues: 3-phosphoshikimate 1-carboxyvinyltransferase (427 aa).

Positions 22, 23, and 27 each coordinate 3-phosphoshikimate. Phosphoenolpyruvate is bound at residue K22. Residues G96 and R124 each coordinate phosphoenolpyruvate. S170, S171, Q172, S198, D314, N337, and K341 together coordinate 3-phosphoshikimate. Q172 contacts phosphoenolpyruvate. The active-site Proton acceptor is the D314. Phosphoenolpyruvate is bound by residues R345, R387, and K412.

This sequence belongs to the EPSP synthase family. Monomer.

It localises to the cytoplasm. It catalyses the reaction 3-phosphoshikimate + phosphoenolpyruvate = 5-O-(1-carboxyvinyl)-3-phosphoshikimate + phosphate. It participates in metabolic intermediate biosynthesis; chorismate biosynthesis; chorismate from D-erythrose 4-phosphate and phosphoenolpyruvate: step 6/7. Its function is as follows. Catalyzes the transfer of the enolpyruvyl moiety of phosphoenolpyruvate (PEP) to the 5-hydroxyl of shikimate-3-phosphate (S3P) to produce enolpyruvyl shikimate-3-phosphate and inorganic phosphate. The chain is 3-phosphoshikimate 1-carboxyvinyltransferase from Sulfurovum sp. (strain NBC37-1).